A 204-amino-acid chain; its full sequence is LexA repressor (204 aa).

Positions 29 to 49 form a DNA-binding region, H-T-H motif; that stretch reads VREIGDAVGLMSSSTVHGHLQ. Catalysis depends on for autocatalytic cleavage activity residues Ser127 and Lys164.

The protein belongs to the peptidase S24 family. As to quaternary structure, homodimer.

It catalyses the reaction Hydrolysis of Ala-|-Gly bond in repressor LexA.. Functionally, represses a number of genes involved in the response to DNA damage (SOS response), including recA and lexA. In the presence of single-stranded DNA, RecA interacts with LexA causing an autocatalytic cleavage which disrupts the DNA-binding part of LexA, leading to derepression of the SOS regulon and eventually DNA repair. In Desulfitobacterium hafniense (strain DSM 10664 / DCB-2), this protein is LexA repressor.